The chain runs to 311 residues: Short chain dehydrogenase opdN (311 aa).

NADP(+)-binding residues include Leu-48, Lys-73, Glu-96, Asn-123, Tyr-217, and Lys-221. The active-site Proton donor is the Tyr-217. Lys-221 (lowers pKa of active site Tyr) is an active-site residue.

It belongs to the short-chain dehydrogenases/reductases (SDR) family.

It participates in secondary metabolite biosynthesis. Functionally, short chain dehydrogenase; part of the gene cluster that mediates the biosynthesis of oxopyrrolidines, polyketide-amino acid hybrid compounds with feature structures of tetramic acid. Does not seem to play a role in oxopyrrolidines A and B biosynthesis. May be involved in further modifications of these oxopyrrolidines. The protein is Short chain dehydrogenase opdN of Penicillium oxalicum (strain 114-2 / CGMCC 5302) (Penicillium decumbens).